Consider the following 203-residue polypeptide: Endo-type membrane-bound lytic murein transglycosylase A (203 aa).

The signal sequence occupies residues 1-15 (MKLRWFAFLVVLLAG). C16 is lipidated: N-palmitoyl cysteine. Residue C16 is the site of S-diacylglycerol cysteine attachment.

It belongs to the transglycosylase Slt family.

The protein resides in the cell outer membrane. The catalysed reaction is Endolytic cleavage of the (1-&gt;4)-beta-glycosidic linkage between N-acetylmuramic acid (MurNAc) and N-acetylglucosamine (GlcNAc) residues in peptidoglycan with concomitant formation of a 1,6-anhydrobond in the MurNAc residue.. Functionally, murein-degrading enzyme. May play a role in recycling of muropeptides during cell elongation and/or cell division. Preferentially cleaves at a distance of more than two disaccharide units from the ends of the glycan chain. The sequence is that of Endo-type membrane-bound lytic murein transglycosylase A from Citrobacter koseri (strain ATCC BAA-895 / CDC 4225-83 / SGSC4696).